Reading from the N-terminus, the 161-residue chain is Lipoprotein signal peptidase (161 aa).

Helical transmembrane passes span 9–29, 64–84, and 96–113; these read WLWL…LVVE, WQKY…ANVL, and MAYA…IDRA. Active-site residues include aspartate 120 and aspartate 138. The helical transmembrane segment at 133–153 threads the bilayer; it reads VFNIADVAIVMGAGLLILETF.

It belongs to the peptidase A8 family.

Its subcellular location is the cell inner membrane. It carries out the reaction Release of signal peptides from bacterial membrane prolipoproteins. Hydrolyzes -Xaa-Yaa-Zaa-|-(S,diacylglyceryl)Cys-, in which Xaa is hydrophobic (preferably Leu), and Yaa (Ala or Ser) and Zaa (Gly or Ala) have small, neutral side chains.. The protein operates within protein modification; lipoprotein biosynthesis (signal peptide cleavage). This protein specifically catalyzes the removal of signal peptides from prolipoproteins. The chain is Lipoprotein signal peptidase from Haemophilus ducreyi (strain 35000HP / ATCC 700724).